The sequence spans 668 residues: Probable tRNA (uracil-O(2)-)-methyltransferase (668 aa).

Residues 441–460 are disordered; that stretch reads QHTDSLHISTKSSLDKDDPP. The segment at 620-649 adopts a C3H1-type zinc-finger fold; sequence LKTRLCWFYVHHPNGCPRVAKSCPYAHGAE.

This sequence belongs to the TRM44 family.

The protein resides in the cytoplasm. It carries out the reaction uridine(44) in tRNA(Ser) + S-adenosyl-L-methionine = 2'-O-methyluridine(44) in tRNA(Ser) + S-adenosyl-L-homocysteine + H(+). In terms of biological role, probable adenosyl-L-methionine (AdoMet)-dependent tRNA (uracil-O(2)-)-methyltransferase. In Xenopus laevis (African clawed frog), this protein is Probable tRNA (uracil-O(2)-)-methyltransferase (trmt44).